Reading from the N-terminus, the 66-residue chain is MPKLKTKSGAKKRFKITATGKVKHAQRGKRHGMIKRTKKQIRQLRGTRVLFKTDGDNIKKYFLPNA.

A disordered region spans residues 20–40 (GKVKHAQRGKRHGMIKRTKKQ).

Belongs to the bacterial ribosomal protein bL35 family.

The protein is Large ribosomal subunit protein bL35 of Nitrobacter winogradskyi (strain ATCC 25391 / DSM 10237 / CIP 104748 / NCIMB 11846 / Nb-255).